The primary structure comprises 62 residues: Large ribosomal subunit protein bL28 (62 aa).

This sequence belongs to the bacterial ribosomal protein bL28 family.

This Acidothermus cellulolyticus (strain ATCC 43068 / DSM 8971 / 11B) protein is Large ribosomal subunit protein bL28.